The chain runs to 226 residues: MEPIKNLPRLCRTLGYEFKNLDLLTQALTHRSAANKHNERLEFLGDSILSIVISDALYHQFPKATEGDLSRMRATLVRGDTLTLIAQAFKLGDYLFLGPGELKSGGFRRESILADAVEAIIGAIYLDSDLEVCRQLLLNWYAERLAEIQPGINQKDAKTLLQEYLQGLKKPLPDYQVINIEGDAHDQTFTVECRIDDLSQSVIGVASSRRKAEQIAAAQVLELLKK.

Residues 7–129 enclose the RNase III domain; the sequence is LPRLCRTLGY…IIGAIYLDSD (123 aa). Glu42 provides a ligand contact to Mg(2+). Asp46 is a catalytic residue. 2 residues coordinate Mg(2+): Asp115 and Glu118. Glu118 is an active-site residue. The region spanning 156–226 is the DRBM domain; it reads DAKTLLQEYL…AAQVLELLKK (71 aa).

The protein belongs to the ribonuclease III family. In terms of assembly, homodimer. Mg(2+) serves as cofactor.

Its subcellular location is the cytoplasm. The enzyme catalyses Endonucleolytic cleavage to 5'-phosphomonoester.. Its function is as follows. Digests double-stranded RNA. Involved in the processing of primary rRNA transcript to yield the immediate precursors to the large and small rRNAs (23S and 16S). Processes some mRNAs, and tRNAs when they are encoded in the rRNA operon. Processes pre-crRNA and tracrRNA of type II CRISPR loci if present in the organism. This chain is Ribonuclease 3, found in Shewanella oneidensis (strain ATCC 700550 / JCM 31522 / CIP 106686 / LMG 19005 / NCIMB 14063 / MR-1).